The sequence spans 96 residues: Non-specific lipid-transfer protein 2G (96 aa).

A signal peptide spans 1–29 (MAGMMKKQVVTALMLALVVLAAAPGGARA). 4 disulfides stabilise this stretch: cysteine 31/cysteine 63, cysteine 39/cysteine 53, cysteine 54/cysteine 89, and cysteine 65/cysteine 96.

It localises to the secreted. It is found in the cell wall. In terms of biological role, transfer lipids across membranes. May play a role in plant defense or in the biosynthesis of cuticle layers. The polypeptide is Non-specific lipid-transfer protein 2G (Triticum aestivum (Wheat)).